The following is a 691-amino-acid chain: Ribonuclease J (691 aa).

Positions 1–89 (MTDNNHYENN…TRNYAKEELD (89 aa)) are disordered. The tract at residues 1 to 132 (MTDNNHYENN…KIQVEHLNPH (132 aa)) is loss of region decreases protein stability, still able to interact with RhpA, but has decreased RNase activity even on ssRNA. The span at 10-19 (NESNENSSEN) shows a compositional bias: low complexity. Residues 41–57 (RENAQKNGESSHHEAPS) are compositionally biased toward basic and acidic residues. The span at 58–82 (HHKKEHRPNKKPNNHHKQKHAKTRN) shows a compositional bias: basic residues. N6-acetyllysine is present on residues Lys-134 and Lys-140. The Zn(2+) site is built by His-208, His-210, Asp-212, His-213, His-277, and Asp-299. Residues Lys-323, Lys-337, and Lys-397 each carry the N6-acetyllysine modification. 500-504 (HVSGH) contributes to the substrate binding site. Position 511 is an N6-acetyllysine (Lys-511). Residue His-526 coordinates Zn(2+). N6-acetyllysine is present on residues Lys-547, Lys-634, and Lys-649.

It belongs to the metallo-beta-lactamase superfamily. RNA-metabolizing metallo-beta-lactamase-like family. Bacterial RNase J subfamily. As to quaternary structure, homodimer. Homotetramer; dimer of homodimers. Interacts with RNA helicase RphA, might be a member of a minimal RNA degradosome complex. The cofactor is Zn(2+). Acetylated on nine lysine residues. Some of the residues are acetylated by multiple different mechanisms. RimL is partially responsible for the acetylation of Lys-323, Lys-397 and Lys-649. HPB8_1270 homolog is partially responsible for the acetylation of Lys-323, Lys-397, Lys-511 and Lys-649. Acetyl-phosphate-mediated non-enzymatic acetylation pathway takes part in the acetylation of Lys-134, Lys-323, Lys-397, Lys-511 and Lys-649. Acetylation of the remaining residues Lys-140, Lys-337, Lys-547 and Lys-634 occurs by a yet undetermined mechanism. Acetylation on a number of these residues is important for growth regulation and proper cell morphology.

The protein resides in the cytoplasm. With respect to regulation, catalytic activity is regulated by the balance between homodimers and homotetramers, with homotetramers being the active forms of this enzyme. Acetylation allosterically regulates the homooligomerization state and hence the catalytic activity. An RNase that has 5'-3' exoribonuclease and endoribonuclease activity. Degrades 5'-monophosphorylated ssRNA and dsRNA, considerably more active on ssRNA. Association with RhpA significantly increases the dsRNase activity. Degrades RNA substrate with hairpin structures at both ends with low activity, but presence of RhpA significantly increases the activity on this substrate. Stimulates ATPase activity of RNA helicase RhpA. Involved in stabilization of mRNA but apparently not rRNA. The chain is Ribonuclease J from Helicobacter pylori (strain B128).